Consider the following 451-residue polypeptide: Glucose-6-phosphate isomerase (451 aa).

The Proton donor role is filled by glutamate 291. Residues histidine 312 and lysine 426 contribute to the active site.

Belongs to the GPI family.

It is found in the cytoplasm. The enzyme catalyses alpha-D-glucose 6-phosphate = beta-D-fructose 6-phosphate. The protein operates within carbohydrate biosynthesis; gluconeogenesis. It participates in carbohydrate degradation; glycolysis; D-glyceraldehyde 3-phosphate and glycerone phosphate from D-glucose: step 2/4. Functionally, catalyzes the reversible isomerization of glucose-6-phosphate to fructose-6-phosphate. This chain is Glucose-6-phosphate isomerase, found in Caldanaerobacter subterraneus subsp. tengcongensis (strain DSM 15242 / JCM 11007 / NBRC 100824 / MB4) (Thermoanaerobacter tengcongensis).